The sequence spans 98 residues: Large ribosomal subunit protein bL28 (98 aa).

In terms of assembly, part of the 50S ribosomal subunit.

This is Large ribosomal subunit protein bL28 (rpmB) from Thermus thermophilus (strain ATCC 27634 / DSM 579 / HB8).